We begin with the raw amino-acid sequence, 334 residues long: Glyceraldehyde-3-phosphate dehydrogenase (334 aa).

NAD(+) contacts are provided by residues 12–13 (RI), Asp-37, Arg-81, and Ser-123. Residues 153–155 (SCT) and Thr-184 each bind D-glyceraldehyde 3-phosphate. Cys-154 functions as the Nucleophile in the catalytic mechanism. Asn-185 contacts NAD(+). D-glyceraldehyde 3-phosphate is bound by residues Arg-199, 212-213 (TG), and Arg-235. Asn-314 contacts NAD(+).

It belongs to the glyceraldehyde-3-phosphate dehydrogenase family. Homotetramer.

It is found in the cytoplasm. The catalysed reaction is D-glyceraldehyde 3-phosphate + phosphate + NAD(+) = (2R)-3-phospho-glyceroyl phosphate + NADH + H(+). It participates in carbohydrate degradation; glycolysis; pyruvate from D-glyceraldehyde 3-phosphate: step 1/5. In terms of biological role, catalyzes the oxidative phosphorylation of glyceraldehyde 3-phosphate (G3P) to 1,3-bisphosphoglycerate (BPG) using the cofactor NAD. The first reaction step involves the formation of a hemiacetal intermediate between G3P and a cysteine residue, and this hemiacetal intermediate is then oxidized to a thioester, with concomitant reduction of NAD to NADH. The reduced NADH is then exchanged with the second NAD, and the thioester is attacked by a nucleophilic inorganic phosphate to produce BPG. In Pseudomonas aeruginosa (strain ATCC 15692 / DSM 22644 / CIP 104116 / JCM 14847 / LMG 12228 / 1C / PRS 101 / PAO1), this protein is Glyceraldehyde-3-phosphate dehydrogenase (gap).